Reading from the N-terminus, the 366-residue chain is DNA repair protein RAD51 homolog 3 (366 aa).

The interval 1–117 (MQRELVSFPL…LMKTTEVCGV (117 aa)) is required for Holliday junction resolution activity. A Phosphoserine modification is found at Ser11. Residues 70–127 (SVAGKKYTALELLEQEHTQGFIITFCSALDNILGGGIPLMKTTEVCGVPGVGKTQLCM) are interaction with RAD51B, RAD51D and XRCC3. Position 116–123 (116–123 (GVPGVGKT)) interacts with ATP. The disordered stretch occupies residues 338–366 (RDAAVTASSSQTEGSSNLRKRSREPEEGC). Polar residues predominate over residues 343-354 (TASSSQTEGSSN). The Nuclear localization signal signature appears at 356–360 (RKRSR).

The protein belongs to the RecA family. RAD51 subfamily. In terms of assembly, part of the RAD51 paralog protein complexes BCDX2 and CX3; the complexes have a ring-like structure arranged into a flat disc around a central channel. The BCDX2 complex consits of RAD51B, RAD51C, RAD51D and XRCC2; the CX3 complex consists of RAD51C and XRCC3. The BCDX2 subcomplex RAD51B:RAD51C interacts with RAD51. Interacts with SWSAP1; involved in homologous recombination repair. Interacts directly with PALB2 which may serve as a scaffold for a HR complex containing PALB2, BRCA2, RAD51C, RAD51 and XRCC3. Interacts with HELQ.

The protein resides in the nucleus. Its subcellular location is the cytoplasm. It is found in the perinuclear region. It localises to the mitochondrion. Functionally, essential for the homologous recombination (HR) pathway of DNA repair. Involved in the homologous recombination repair (HRR) pathway of double-stranded DNA breaks arising during DNA replication or induced by DNA-damaging agents. Part of the RAD51 paralog protein complexes BCDX2 and CX3 which act at different stages of the BRCA1-BRCA2-dependent HR pathway. Upon DNA damage, BCDX2 seems to act downstream of BRCA2 recruitment and upstream of RAD51 recruitment; CX3 seems to act downstream of RAD51 recruitment; both complexes bind predominantly to the intersection of the four duplex arms of the Holliday junction (HJ) and to junction of replication forks. The BCDX2 complex was originally reported to bind single-stranded DNA, single-stranded gaps in duplex DNA and specifically to nicks in duplex DNA. The BCDX2 subcomplex RAD51B:RAD51C exhibits single-stranded DNA-dependent ATPase activity suggesting an involvement in early stages of the HR pathway. Involved in RAD51 foci formation in response to DNA damage suggesting an involvement in early stages of HR probably in the invasion step. Has an early function in DNA repair in facilitating phosphorylation of the checkpoint kinase CHEK2 and thereby transduction of the damage signal, leading to cell cycle arrest and HR activation. Participates in branch migration and HJ resolution and thus is important for processing HR intermediates late in the DNA repair process; the function may be linked to the CX3 complex. Part of a PALB2-scaffolded HR complex containing BRCA2 and which is thought to play a role in DNA repair by HR. Protects RAD51 from ubiquitin-mediated degradation that is enhanced following DNA damage. Plays a role in regulating mitochondrial DNA copy number under conditions of oxidative stress in the presence of RAD51 and XRCC3. Contributes to DNA cross-link resistance, sister chromatid cohesion and genomic stability. Involved in maintaining centrosome number in mitosis. The sequence is that of DNA repair protein RAD51 homolog 3 (RAD51C) from Cricetulus griseus (Chinese hamster).